Here is a 249-residue protein sequence, read N- to C-terminus: Small ribosomal subunit protein uS5 (249 aa).

Over residues 1–14 (MSAEAPKRQFGDRR) the composition is skewed to basic and acidic residues. The segment at 1–29 (MSAEAPKRQFGDRRRGGRRGGRRDGEEKG) is disordered. The S5 DRBM domain occupies 71–134 (LKDDVMKIRS…VIAKLSIIPI (64 aa)).

It belongs to the universal ribosomal protein uS5 family. In terms of assembly, component of the small ribosomal subunit. Mature ribosomes consist of a small (40S) and a large (60S) subunit. The 40S subunit contains about 32 different proteins and 1 molecule of RNA (18S). The 60S subunit contains 45 different proteins and 3 molecules of RNA (25S, 5.8S and 5S).

It is found in the cytoplasm. Functionally, component of the ribosome, a large ribonucleoprotein complex responsible for the synthesis of proteins in the cell. The small ribosomal subunit (SSU) binds messenger RNAs (mRNAs) and translates the encoded message by selecting cognate aminoacyl-transfer RNA (tRNA) molecules. The large subunit (LSU) contains the ribosomal catalytic site termed the peptidyl transferase center (PTC), which catalyzes the formation of peptide bonds, thereby polymerizing the amino acids delivered by tRNAs into a polypeptide chain. The nascent polypeptides leave the ribosome through a tunnel in the LSU and interact with protein factors that function in enzymatic processing, targeting, and the membrane insertion of nascent chains at the exit of the ribosomal tunnel. RPS2 is important for the assembly and function of the 40S ribosomal subunitand is nvolved in nucleolar processing of pre-18S ribosomal RNA and ribosome assembly. This chain is Small ribosomal subunit protein uS5 (RPS21), found in Candida albicans (strain SC5314 / ATCC MYA-2876) (Yeast).